The following is a 248-amino-acid chain: 5'-nucleotidase SurE (248 aa).

Asp-8, Asp-9, Ser-39, and Asn-91 together coordinate a divalent metal cation.

The protein belongs to the SurE nucleotidase family. It depends on a divalent metal cation as a cofactor.

It localises to the cytoplasm. It carries out the reaction a ribonucleoside 5'-phosphate + H2O = a ribonucleoside + phosphate. Nucleotidase that shows phosphatase activity on nucleoside 5'-monophosphates. This is 5'-nucleotidase SurE from Geotalea uraniireducens (strain Rf4) (Geobacter uraniireducens).